Reading from the N-terminus, the 404-residue chain is Cysteine desulfurase IscS (404 aa).

Pyridoxal 5'-phosphate-binding positions include 75 to 76, Asn155, Gln183, and 203 to 205; these read AT and SAH. Lys206 is modified (N6-(pyridoxal phosphate)lysine). Thr243 provides a ligand contact to pyridoxal 5'-phosphate. The Cysteine persulfide intermediate role is filled by Cys328. Cys328 is a binding site for [2Fe-2S] cluster.

This sequence belongs to the class-V pyridoxal-phosphate-dependent aminotransferase family. NifS/IscS subfamily. Homodimer. Forms a heterotetramer with IscU, interacts with other sulfur acceptors. Pyridoxal 5'-phosphate serves as cofactor.

Its subcellular location is the cytoplasm. The enzyme catalyses (sulfur carrier)-H + L-cysteine = (sulfur carrier)-SH + L-alanine. The protein operates within cofactor biosynthesis; iron-sulfur cluster biosynthesis. Master enzyme that delivers sulfur to a number of partners involved in Fe-S cluster assembly, tRNA modification or cofactor biosynthesis. Catalyzes the removal of elemental sulfur atoms from cysteine to produce alanine. Functions as a sulfur delivery protein for Fe-S cluster synthesis onto IscU, an Fe-S scaffold assembly protein, as well as other S acceptor proteins. In Pseudomonas putida (strain W619), this protein is Cysteine desulfurase IscS.